A 297-amino-acid polypeptide reads, in one-letter code: Undecaprenyl-diphosphatase (297 aa).

7 helical membrane passes run 39 to 59 (PGAA…LIYF), 85 to 105 (ARLA…GLTL), 113 to 133 (FRSL…LLVV), 151 to 171 (GILI…RSGT), 190 to 210 (SFLL…KHLL), 220 to 240 (ALWV…AWLL), and 249 to 269 (LVFV…LQTG).

Belongs to the UppP family.

It is found in the cell inner membrane. The enzyme catalyses di-trans,octa-cis-undecaprenyl diphosphate + H2O = di-trans,octa-cis-undecaprenyl phosphate + phosphate + H(+). Its function is as follows. Catalyzes the dephosphorylation of undecaprenyl diphosphate (UPP). Confers resistance to bacitracin. This Myxococcus xanthus (strain DK1622) protein is Undecaprenyl-diphosphatase.